Consider the following 155-residue polypeptide: Protein U1 (155 aa).

Belongs to the nanovirus U1 protein family.

This Cicer arietinum (Chickpea) protein is Protein U1 (DNA-U1).